Here is a 249-residue protein sequence, read N- to C-terminus: Probable transcriptional regulatory protein AB57_1731 (249 aa).

It belongs to the TACO1 family.

It is found in the cytoplasm. This is Probable transcriptional regulatory protein AB57_1731 from Acinetobacter baumannii (strain AB0057).